The following is a 256-amino-acid chain: Ubiquinone/menaquinone biosynthesis C-methyltransferase UbiE (256 aa).

The span at 1–12 (MTDPRKGDHAEP) shows a compositional bias: basic and acidic residues. The interval 1 to 21 (MTDPRKGDHAEPTTHFGYQDV) is disordered. Residues T79, D100, and 128-129 (DA) contribute to the S-adenosyl-L-methionine site.

It belongs to the class I-like SAM-binding methyltransferase superfamily. MenG/UbiE family.

It catalyses the reaction a 2-demethylmenaquinol + S-adenosyl-L-methionine = a menaquinol + S-adenosyl-L-homocysteine + H(+). The catalysed reaction is a 2-methoxy-6-(all-trans-polyprenyl)benzene-1,4-diol + S-adenosyl-L-methionine = a 5-methoxy-2-methyl-3-(all-trans-polyprenyl)benzene-1,4-diol + S-adenosyl-L-homocysteine + H(+). It functions in the pathway quinol/quinone metabolism; menaquinone biosynthesis; menaquinol from 1,4-dihydroxy-2-naphthoate: step 2/2. It participates in cofactor biosynthesis; ubiquinone biosynthesis. In terms of biological role, methyltransferase required for the conversion of demethylmenaquinol (DMKH2) to menaquinol (MKH2) and the conversion of 2-polyprenyl-6-methoxy-1,4-benzoquinol (DDMQH2) to 2-polyprenyl-3-methyl-6-methoxy-1,4-benzoquinol (DMQH2). The polypeptide is Ubiquinone/menaquinone biosynthesis C-methyltransferase UbiE (Pseudomonas entomophila (strain L48)).